A 617-amino-acid chain; its full sequence is Manganese lipoxygenase (617 aa).

A signal peptide spans 1 to 17 (MRIGLLAFAVAARYVEA). Positions 23–48 (GEEVASSSAPTTLPSTSSSSALPSPT) are enriched in low complexity. Residues 23–59 (GEEVASSSAPTTLPSTSSSSALPSPTKYTLPHEDPNP) form a disordered region. Residues asparagine 109, asparagine 119, and asparagine 160 are each glycosylated (N-linked (GlcNAc...) asparagine). One can recognise a Lipoxygenase domain in the interval 122 to 617 (LRDIQSHGGL…PAVNPFFLSI (496 aa)). The Mn(2+) site is built by histidine 293, histidine 297, histidine 479, and asparagine 483. Asparagine 547 is a glycosylation site (N-linked (GlcNAc...) asparagine). Isoleucine 617 is a Mn(2+) binding site.

This sequence belongs to the lipoxygenase family. Manganese lipoxygenase subfamily. Mn(2+) serves as cofactor.

It is found in the secreted. The enzyme catalyses (9Z,12Z)-octadecadienoate + O2 = (9S)-hydroperoxy-(10E,12Z)-octadecadienoate. It carries out the reaction (9Z,12Z)-octadecadienoate + O2 = (11S)-hydroperoxy-(9Z,12Z)-octadecadienoate. The catalysed reaction is (9Z,12Z)-octadecadienoate + O2 = (13R)-hydroperoxy-(9Z,11E)-octadecadienoate. It catalyses the reaction (9Z,12Z,15Z)-octadecatrienoate + O2 = (9S)-hydroperoxy-(10E,12Z,15Z)-octadecatrienoate. The enzyme catalyses (9Z,12Z,15Z)-octadecatrienoate + O2 = (11R)-hydroperoxy-(9Z,12Z,15Z)-octadecatrienoate. It carries out the reaction (9Z,12Z,15Z)-octadecatrienoate + O2 = (13R)-hydroperoxy-(9Z,11E,15Z)-octadecatrienoate. Its function is as follows. Lipoxygenase that metabolizes linoleic and alpha-linolenic acids to 9S-, 11- and 13R-hydroperoxy fatty acids. At the end of lipoxygenation, the intermediate products 11S-HPODE and 13R-HPODE from linoleic acid are then transformed into 9S-HPODE as the final product. The intermediate product 11R-HPOTrE from alpha-linolenic acid is transformed into 9S-HPOTrE and 13R-HPOTrE as the final products. 9S-HPOTrE is further oxidized by the enzyme to 9,16-DiHOTrE as the end product. Also acts on gamma-linolenic acid producing 9-HOTrE(n-6) as the main metabolite. In Nakataea oryzae (Rice stem rot fungus), this protein is Manganese lipoxygenase.